The sequence spans 211 residues: ATP phosphoribosyltransferase (211 aa).

Belongs to the ATP phosphoribosyltransferase family. Short subfamily. Heteromultimer composed of HisG and HisZ subunits.

The protein localises to the cytoplasm. It catalyses the reaction 1-(5-phospho-beta-D-ribosyl)-ATP + diphosphate = 5-phospho-alpha-D-ribose 1-diphosphate + ATP. The protein operates within amino-acid biosynthesis; L-histidine biosynthesis; L-histidine from 5-phospho-alpha-D-ribose 1-diphosphate: step 1/9. Functionally, catalyzes the condensation of ATP and 5-phosphoribose 1-diphosphate to form N'-(5'-phosphoribosyl)-ATP (PR-ATP). Has a crucial role in the pathway because the rate of histidine biosynthesis seems to be controlled primarily by regulation of HisG enzymatic activity. In Thermosynechococcus vestitus (strain NIES-2133 / IAM M-273 / BP-1), this protein is ATP phosphoribosyltransferase.